We begin with the raw amino-acid sequence, 701 residues long: Lutropin-choriogonadotropic hormone receptor (701 aa).

Positions 1 to 26 are cleaved as a signal peptide; sequence MGRPSLALRLLLALLLLPPPAPLLWA. Over 27–365 the chain is Extracellular; sequence LRPAPCPEPC…EDIMGYNFLR (339 aa). Residue Asn-101 is glycosylated (N-linked (GlcNAc...) asparagine). 6 LRR repeats span residues 124-149, 151-173, 174-198, 200-222, 223-246, and 250-271; these read LPRLKYLSICNTGIHKLPDVTKIFSS, FNFILEICDNLHITTIPRNAFQG, MNNESITLKLYGNGFEEIQSHAFNG, TLISLELKENARLEKMHNDAFRG, ATGPSILDISSTKLQALPTYGLES, and LIATSSYSLKKLPSREKFTNLL. 2 N-linked (GlcNAc...) asparagine glycosylation sites follow: Asn-176 and Asn-197. N-linked (GlcNAc...) asparagine glycans are attached at residues Asn-293, Asn-301, and Asn-315. Tyr-333 carries the sulfotyrosine modification. Residues 366–387 form a helical membrane-spanning segment; the sequence is VLIWLINILAITGNVTVLFVLL. Topologically, residues 388–397 are cytoplasmic; that stretch reads TSRYKLTVPR. A helical membrane pass occupies residues 398-418; that stretch reads FLMCNLSFADFCMGLYLLLIA. Over 419 to 441 the chain is Extracellular; sequence SVDAQTKGQYYNHAIDWQTGSGC. An intrachain disulfide couples Cys-441 to Cys-516. The chain crosses the membrane as a helical span at residues 442-464; that stretch reads SAAGFFTVFASELSVYTLTVITL. Over 465-484 the chain is Cytoplasmic; that stretch reads ERWHTITYAIQLDQKLRLKH. The helical transmembrane segment at 485 to 507 threads the bilayer; sequence AIPVMLGGWLFSTLIAVLPLVGV. Topologically, residues 508-527 are extracellular; it reads SNYMKVSICLPMDVESTLSQ. Residues 528–551 traverse the membrane as a helical segment; the sequence is VYILTILILNVMAFIIICACYIKI. The Cytoplasmic segment spans residues 552–572; sequence YFAVQNPELMATNKDTKIAKK. A helical membrane pass occupies residues 573-596; sequence MAVLIFTDFTCMAPISFFAISAAF. At 597 to 607 the chain is on the extracellular side; it reads KVPLITVTNSK. A helical transmembrane segment spans residues 608–629; it reads VLLVLFYPVNSCANPFLYAIFT. Over 630–701 the chain is Cytoplasmic; the sequence is KAFQRDFFLL…VLDKTCYKEC (72 aa). Residues Cys-645 and Cys-646 are each lipidated (S-palmitoyl cysteine).

It belongs to the G-protein coupled receptor 1 family. FSH/LSH/TSH subfamily. In terms of processing, sulfated.

It localises to the cell membrane. In terms of biological role, receptor for lutropin-choriogonadotropic hormone. The activity of this receptor is mediated by G proteins which activate adenylate cyclase. This chain is Lutropin-choriogonadotropic hormone receptor (LHCGR), found in Bos taurus (Bovine).